Reading from the N-terminus, the 97-residue chain is YcgL domain-containing protein PSEEN4034 (97 aa).

Residues 3–87 enclose the YcgL domain; the sequence is RICSIYKSPR…PDDDYIEHLP (85 aa).

This Pseudomonas entomophila (strain L48) protein is YcgL domain-containing protein PSEEN4034.